A 232-amino-acid chain; its full sequence is Myb-related protein 308 (232 aa).

HTH myb-type domains follow at residues Lys9–Leu61 and Arg62–Leu116. 2 consecutive DNA-binding regions (H-T-H motif) follow at residues Trp37 to Leu61 and Trp89 to Ile112.

As to expression, expressed in roots, stems, leaves, seed pods and flowers.

The protein resides in the nucleus. Transcription factor. The chain is Myb-related protein 308 from Antirrhinum majus (Garden snapdragon).